The sequence spans 283 residues: Pyridoxal kinase PdxY (283 aa).

Position 8 (Ser8) interacts with substrate. The ATP site is built by Asp110 and Glu147. Asp219 contributes to the substrate binding site.

This sequence belongs to the pyridoxine kinase family. PdxY subfamily. Homodimer. Mg(2+) is required as a cofactor.

The catalysed reaction is pyridoxal + ATP = pyridoxal 5'-phosphate + ADP + H(+). It participates in cofactor metabolism; pyridoxal 5'-phosphate salvage; pyridoxal 5'-phosphate from pyridoxal: step 1/1. Its function is as follows. Pyridoxal kinase involved in the salvage pathway of pyridoxal 5'-phosphate (PLP). Catalyzes the phosphorylation of pyridoxal to PLP. The protein is Pyridoxal kinase PdxY of Leifsonia xyli subsp. xyli (strain CTCB07).